The primary structure comprises 319 residues: Acetyl esterase (319 aa).

The Involved in the stabilization of the negatively charged intermediate by the formation of the oxyanion hole signature appears at 91–93; that stretch reads HGG. Residues S165, D262, and H292 contribute to the active site.

This sequence belongs to the 'GDXG' lipolytic enzyme family. As to quaternary structure, homodimer. Interacts with MalT and MelA.

The protein resides in the cytoplasm. Displays esterase activity towards short chain fatty esters (acyl chain length of up to 8 carbons). Able to hydrolyze triacetylglycerol (triacetin) and tributyrylglycerol (tributyrin), but not trioleylglycerol (triolein) or cholesterol oleate. Negatively regulates MalT activity by antagonizing maltotriose binding. Inhibits MelA galactosidase activity. The sequence is that of Acetyl esterase from Shigella boydii serotype 18 (strain CDC 3083-94 / BS512).